The following is a 335-amino-acid chain: uncharacterized protein (335 aa).

This is an uncharacterized protein from Schizosaccharomyces pombe (strain 972 / ATCC 24843) (Fission yeast).